The following is a 97-amino-acid chain: U-scoloptoxin(10)-Ssd2a (97 aa).

The signal sequence occupies residues 1-23 (MNKSMLIFFTILFLTYIIEEKEA).

Contains 3 disulfide bonds. In terms of tissue distribution, expressed by the venom gland.

The protein localises to the secreted. This Scolopendra dehaani (Thai centipede) protein is U-scoloptoxin(10)-Ssd2a.